A 334-amino-acid chain; its full sequence is L-lactate dehydrogenase B-B chain (334 aa).

Residues 30 to 58 (GQVGMACAVSVLLRELADELALVDVVEDK) and Arg100 each bind NAD(+). 3 residues coordinate substrate: Arg107, Asn139, and Arg170. Residue Asn139 coordinates NAD(+). His194 (proton acceptor) is an active-site residue. Thr249 contributes to the substrate binding site.

This sequence belongs to the LDH/MDH superfamily. LDH family. In terms of assembly, homotetramer.

It localises to the cytoplasm. The catalysed reaction is (S)-lactate + NAD(+) = pyruvate + NADH + H(+). It functions in the pathway fermentation; pyruvate fermentation to lactate; (S)-lactate from pyruvate: step 1/1. In Danio rerio (Zebrafish), this protein is L-lactate dehydrogenase B-B chain.